Here is a 296-residue protein sequence, read N- to C-terminus: Fructose-bisphosphate aldolase class 1 (296 aa).

The Proton acceptor role is filled by glutamate 175. Lysine 212 (schiff-base intermediate with dihydroxyacetone-P) is an active-site residue.

The protein belongs to the class I fructose-bisphosphate aldolase family.

The catalysed reaction is beta-D-fructose 1,6-bisphosphate = D-glyceraldehyde 3-phosphate + dihydroxyacetone phosphate. The protein operates within carbohydrate degradation; glycolysis; D-glyceraldehyde 3-phosphate and glycerone phosphate from D-glucose: step 4/4. The protein is Fructose-bisphosphate aldolase class 1 (fda) of Staphylococcus carnosus (strain TM300).